The sequence spans 223 residues: Neurotrophic factor BDNF precursor form (223 aa).

A signal peptide spans 1–5; the sequence is SCMKA. A propeptide spanning residues 6–114 is cleaved from the precursor; it reads APMKEVSIRG…AANMSMRVRR (109 aa). N-linked (GlcNAc...) asparagine glycosylation occurs at Asn-107. Intrachain disulfides connect Cys-127/Cys-194 and Cys-172/Cys-223.

Belongs to the NGF-beta family.

Its subcellular location is the secreted. Promotes the survival of neuronal populations that are all located either in the central nervous system or directly connected to it. The polypeptide is Neurotrophic factor BDNF precursor form (BDNF) (Eryx colubrinus colubrinus).